A 751-amino-acid chain; its full sequence is Myb-related protein A (751 aa).

Residues 1-22 are disordered; it reads MAKRSRSEDEDDDLQYADHDYE. HTH myb-type domains lie at 30-81, 82-137, and 138-188; these read KKLW…QKVL, NPEL…NPEV, and KKSS…RRKV. DNA-binding regions (H-T-H motif) lie at residues 58 to 81, 110 to 133, and 161 to 184; these read WTLI…QKVL, WSLI…HNHL, and WAEI…NSTM. Lys-199 participates in a covalent cross-link: Glycyl lysine isopeptide (Lys-Gly) (interchain with G-Cter in SUMO2). Residues 230 to 294 are transcriptional activation domain; that stretch reads IPGYQYVSPD…RLPPQPGSFS (65 aa). A negative regulatory domain region spans residues 297 to 552; the sequence is SGSFLMDDSM…IRRSILGTTP (256 aa). Lys-393 carries the post-translational modification N6-acetyllysine. Glycyl lysine isopeptide (Lys-Gly) (interchain with G-Cter in SUMO2) cross-links involve residues Lys-591 and Lys-601.

As to quaternary structure, component of the DREAM complex (also named LINC complex) at least composed of E2F4, E2F5, LIN9, LIN37, LIN52, LIN54, MYBL1, MYBL2, RBL1, RBL2, RBBP4, TFDP1 and TFDP2. The complex exists in quiescent cells where it represses cell cycle-dependent genes. It dissociates in S phase when LIN9, LIN37, LIN52 and LIN54 form a subcomplex that binds to MYBL2. As to expression, predominantly in the testis. Very low levels in the ovaries, spleen and brain.

It is found in the nucleus. Its function is as follows. Transcription factor that specifically recognizes the sequence 5'-YAAC[GT]G-3'. Acts as a master regulator of male meiosis by promoting expression of piRNAs: activates expression of both piRNA precursor RNAs and expression of protein-coding genes involved in piRNA metabolism, such as PIWIL1. The piRNA metabolic process mediates the repression of transposable elements during meiosis by forming complexes composed of piRNAs and Piwi proteins and governs the methylation and subsequent repression of transposons, which is essential for the germline integrity. Transcriptional activator of SOX30. The chain is Myb-related protein A (Mybl1) from Mus musculus (Mouse).